The chain runs to 505 residues: Aspartyl/glutamyl-tRNA(Asn/Gln) amidotransferase subunit B (505 aa).

This sequence belongs to the GatB/GatE family. GatB subfamily. Heterotrimer of A, B and C subunits.

The catalysed reaction is L-glutamyl-tRNA(Gln) + L-glutamine + ATP + H2O = L-glutaminyl-tRNA(Gln) + L-glutamate + ADP + phosphate + H(+). It carries out the reaction L-aspartyl-tRNA(Asn) + L-glutamine + ATP + H2O = L-asparaginyl-tRNA(Asn) + L-glutamate + ADP + phosphate + 2 H(+). Functionally, allows the formation of correctly charged Asn-tRNA(Asn) or Gln-tRNA(Gln) through the transamidation of misacylated Asp-tRNA(Asn) or Glu-tRNA(Gln) in organisms which lack either or both of asparaginyl-tRNA or glutaminyl-tRNA synthetases. The reaction takes place in the presence of glutamine and ATP through an activated phospho-Asp-tRNA(Asn) or phospho-Glu-tRNA(Gln). This chain is Aspartyl/glutamyl-tRNA(Asn/Gln) amidotransferase subunit B, found in Kineococcus radiotolerans (strain ATCC BAA-149 / DSM 14245 / SRS30216).